Consider the following 114-residue polypeptide: T cell receptor beta variable 5-1 (114 aa).

The signal sequence occupies residues 1-21 (MGSRLLCWVLLCLLGAGPVKA). One can recognise an Ig-like domain in the interval 22–114 (GVTQTPRYLI…SALYLCASSL (93 aa)). A disulfide bridge connects residues Cys42 and Cys110. Residue Asn96 is glycosylated (N-linked (GlcNAc...) asparagine).

As to quaternary structure, alpha-beta TR is a heterodimer composed of an alpha and beta chain; disulfide-linked. The alpha-beta TR is associated with the transmembrane signaling CD3 coreceptor proteins to form the TR-CD3 (TcR or TCR). The assembly of alpha-beta TR heterodimers with CD3 occurs in the endoplasmic reticulum where a single alpha-beta TR heterodimer associates with one CD3D-CD3E heterodimer, one CD3G-CD3E heterodimer and one CD247 homodimer forming a stable octameric structure. CD3D-CD3E and CD3G-CD3E heterodimers preferentially associate with TR alpha and TR beta chains, respectively. The association of the CD247 homodimer is the last step of TcR assembly in the endoplasmic reticulum and is required for transport to the cell surface.

The protein resides in the cell membrane. V region of the variable domain of T cell receptor (TR) beta chain that participates in the antigen recognition. Alpha-beta T cell receptors are antigen specific receptors which are essential to the immune response and are present on the cell surface of T lymphocytes. Recognize peptide-major histocompatibility (MH) (pMH) complexes that are displayed by antigen presenting cells (APC), a prerequisite for efficient T cell adaptive immunity against pathogens. Binding of alpha-beta TR to pMH complex initiates TR-CD3 clustering on the cell surface and intracellular activation of LCK that phosphorylates the ITAM motifs of CD3G, CD3D, CD3E and CD247 enabling the recruitment of ZAP70. In turn ZAP70 phosphorylates LAT, which recruits numerous signaling molecules to form the LAT signalosome. The LAT signalosome propagates signal branching to three major signaling pathways, the calcium, the mitogen-activated protein kinase (MAPK) kinase and the nuclear factor NF-kappa-B (NF-kB) pathways, leading to the mobilization of transcription factors that are critical for gene expression and essential for T cell growth and differentiation. The T cell repertoire is generated in the thymus, by V-(D)-J rearrangement. This repertoire is then shaped by intrathymic selection events to generate a peripheral T cell pool of self-MH restricted, non-autoaggressive T cells. Post-thymic interaction of alpha-beta TR with the pMH complexes shapes TR structural and functional avidity. The sequence is that of T cell receptor beta variable 5-1 from Homo sapiens (Human).